Reading from the N-terminus, the 178-residue chain is ATP-dependent protease subunit HslV (178 aa).

T7 is a catalytic residue. Na(+) is bound by residues G162, C165, and T168.

The protein belongs to the peptidase T1B family. HslV subfamily. A double ring-shaped homohexamer of HslV is capped on each side by a ring-shaped HslU homohexamer. The assembly of the HslU/HslV complex is dependent on binding of ATP.

Its subcellular location is the cytoplasm. It catalyses the reaction ATP-dependent cleavage of peptide bonds with broad specificity.. Allosterically activated by HslU binding. In terms of biological role, protease subunit of a proteasome-like degradation complex believed to be a general protein degrading machinery. This Burkholderia vietnamiensis (strain G4 / LMG 22486) (Burkholderia cepacia (strain R1808)) protein is ATP-dependent protease subunit HslV.